The chain runs to 689 residues: Glycine--tRNA ligase beta subunit (689 aa).

Belongs to the class-II aminoacyl-tRNA synthetase family. As to quaternary structure, tetramer of two alpha and two beta subunits.

It localises to the cytoplasm. It carries out the reaction tRNA(Gly) + glycine + ATP = glycyl-tRNA(Gly) + AMP + diphosphate. The protein is Glycine--tRNA ligase beta subunit of Dichelobacter nodosus (strain VCS1703A).